The sequence spans 650 residues: Aminopeptidase B (650 aa).

298–302 (GGMEN) contributes to the substrate binding site. Histidine 325 is a binding site for Zn(2+). Glutamate 326 functions as the Proton acceptor in the catalytic mechanism. Zn(2+) is bound by residues histidine 329 and glutamate 348. Lysine 446 bears the N6-acetyllysine mark.

Belongs to the peptidase M1 family. As to quaternary structure, monomer. It depends on Zn(2+) as a cofactor.

Its subcellular location is the secreted. The catalysed reaction is Release of N-terminal Arg and Lys from oligopeptides when P1' is not Pro. Also acts on arylamides of Arg and Lys.. Exopeptidase which selectively removes arginine and/or lysine residues from the N-terminus of several peptide substrates including Arg(0)-Leu-enkephalin, Arg(0)-Met-enkephalin and Arg(-1)-Lys(0)-somatostatin-14. Can hydrolyze leukotriene A4 (LTA-4) into leukotriene B4 (LTB-4). In Mus musculus (Mouse), this protein is Aminopeptidase B (Rnpep).